A 315-amino-acid chain; its full sequence is PIH1 domain-containing protein 2 (315 aa).

The protein belongs to the PIH1 family.

The polypeptide is PIH1 domain-containing protein 2 (Pih1d2) (Mus musculus (Mouse)).